The primary structure comprises 216 residues: Maintenance of carboxysome distribution protein A (216 aa).

Gly-18, Gly-19, Gly-21, Lys-22, Thr-23, Thr-24, and Gln-47 together coordinate ATP. Thr-23 contributes to the Mg(2+) binding site.

The protein belongs to the ParA family. McdA subfamily. Homodimerizes in the presence of ATP. Each subunit binds 1 ATP molecule; some residues cross the dimer interface to contact ATP in the other subunit. Forms a complex with McdB.

The protein resides in the cytoplasm. It is found in the nucleoid. It catalyses the reaction ATP + H2O = ADP + phosphate + H(+). McdA and McdB together mediate carboxysome (Cb) spacing, size, ultrastructure and probably inheritance in the cell, together they prevent Cb aggregation. McdA is an ATPase that forms dynamic gradients on the nucleoid in response to adapter protein McdB, which associates with carboxysomes. The interplay between McdA gradients on the nucleoid and McdB-bound carboxysomes result in the equal spacing of Cbs along the cell length. Its function is as follows. Incorrect positioning (aggregation) of carboxysomes results in reduced CO(2) fixation by encapsulated ribulose-1,5-bisphosphate carboxylase (RuBisCO, cbbL/cbbS), which leads to slower growth. This Gloeobacter kilaueensis (strain ATCC BAA-2537 / CCAP 1431/1 / ULC 316 / JS1) protein is Maintenance of carboxysome distribution protein A.